A 320-amino-acid chain; its full sequence is D-alanine--D-alanine ligase (320 aa).

Residues 101–317 form the ATP-grasp domain; the sequence is KMIFQGAGLP…FSELVCKILS (217 aa). Residue 148–203 coordinates ATP; the sequence is INQLGLPLIVKPSREGSSFGMTKVEHLDQLDDALKKAWHYDEEILVEKWHFGTELT. The Mg(2+) site is built by Asp-271, Glu-284, and Asn-286.

It belongs to the D-alanine--D-alanine ligase family. It depends on Mg(2+) as a cofactor. Mn(2+) serves as cofactor.

It localises to the cytoplasm. The enzyme catalyses 2 D-alanine + ATP = D-alanyl-D-alanine + ADP + phosphate + H(+). It functions in the pathway cell wall biogenesis; peptidoglycan biosynthesis. Cell wall formation. This is D-alanine--D-alanine ligase from Hamiltonella defensa subsp. Acyrthosiphon pisum (strain 5AT).